The chain runs to 231 residues: tRNA (guanine-N(7)-)-methyltransferase (231 aa).

Residues E62, E87, D114, and D136 each contribute to the S-adenosyl-L-methionine site. D136 is an active-site residue. Substrate-binding positions include K140, D172, and 210–213 (TRYE).

It belongs to the class I-like SAM-binding methyltransferase superfamily. TrmB family.

It carries out the reaction guanosine(46) in tRNA + S-adenosyl-L-methionine = N(7)-methylguanosine(46) in tRNA + S-adenosyl-L-homocysteine. It participates in tRNA modification; N(7)-methylguanine-tRNA biosynthesis. Catalyzes the formation of N(7)-methylguanine at position 46 (m7G46) in tRNA. The chain is tRNA (guanine-N(7)-)-methyltransferase from Zymomonas mobilis subsp. mobilis (strain ATCC 31821 / ZM4 / CP4).